The primary structure comprises 411 residues: MDKLLDRFFNYVSFDTQAKANVKSVPSTQGQRKLAQALQQELLTLGFSHVTLSDHGCVMATLPANVSWPVPTIGFIAHLDTSPDFSGKNVNPQIVENYRGGDIALGIGDEVLSPVMFPVLHQLLGHTLITTDGKTLLGADDKAGIAEIITAMVRLKHRNVPHGDIRIAFTPDEEVGKGAQFFNVAEFDAQWAYTVDGGGIGELEFENFNAASVAIKIVGNNVHPGSAKGVMVNALSLATRYHQELPVDETPEYTEGYDGFYHLQSIKGTVERAEMHYIVRDFNRDSFEARKKNMVDIAKRVGKGLHRDCYIEIVIDDSYYNMREQIIKHPHIIELAQQAMLDCDITPIMKPIRGGTDGAQLSFKGLPCPNIFTGGYNYHGKHEFITLEGMEKAVAVIMRISELTAKRAKES.

H78 contributes to the Zn(2+) binding site. Residue D80 is part of the active site. D140 contacts Zn(2+). E173 functions as the Proton acceptor in the catalytic mechanism. The Zn(2+) site is built by E174, D196, and H379.

It belongs to the peptidase M20B family. Zn(2+) serves as cofactor.

Its subcellular location is the cytoplasm. It catalyses the reaction Release of the N-terminal residue from a tripeptide.. Functionally, cleaves the N-terminal amino acid of tripeptides. This chain is Peptidase T, found in Yersinia pseudotuberculosis serotype O:3 (strain YPIII).